Here is a 209-residue protein sequence, read N- to C-terminus: Ribonuclease HII (209 aa).

The RNase H type-2 domain occupies 18–209 (SLVAGVDEVG…FKPVKALLER (192 aa)). 3 residues coordinate a divalent metal cation: aspartate 24, glutamate 25, and aspartate 116.

Belongs to the RNase HII family. The cofactor is Mn(2+). Mg(2+) is required as a cofactor.

The protein resides in the cytoplasm. The enzyme catalyses Endonucleolytic cleavage to 5'-phosphomonoester.. Its function is as follows. Endonuclease that specifically degrades the RNA of RNA-DNA hybrids. The sequence is that of Ribonuclease HII from Shewanella oneidensis (strain ATCC 700550 / JCM 31522 / CIP 106686 / LMG 19005 / NCIMB 14063 / MR-1).